The sequence spans 377 residues: Anhydro-N-acetylmuramic acid kinase (377 aa).

18 to 25 (GTSADGID) provides a ligand contact to ATP.

It belongs to the anhydro-N-acetylmuramic acid kinase family.

It carries out the reaction 1,6-anhydro-N-acetyl-beta-muramate + ATP + H2O = N-acetyl-D-muramate 6-phosphate + ADP + H(+). It participates in amino-sugar metabolism; 1,6-anhydro-N-acetylmuramate degradation. The protein operates within cell wall biogenesis; peptidoglycan recycling. Functionally, catalyzes the specific phosphorylation of 1,6-anhydro-N-acetylmuramic acid (anhMurNAc) with the simultaneous cleavage of the 1,6-anhydro ring, generating MurNAc-6-P. Is required for the utilization of anhMurNAc either imported from the medium or derived from its own cell wall murein, and thus plays a role in cell wall recycling. The polypeptide is Anhydro-N-acetylmuramic acid kinase (Xanthomonas campestris pv. campestris (strain 8004)).